The following is a 119-amino-acid chain: MPRVKRGVTARARHKKVLALAKGFRGRRGNVFRIAKQAVMKAGQYAYRDRRTKKRVFRQLWIARINAAARELGLTYSQFANGLKKASIEVDRKMLADLAVHDKAAFGSIVEQVKAKLAA.

Belongs to the bacterial ribosomal protein bL20 family.

In terms of biological role, binds directly to 23S ribosomal RNA and is necessary for the in vitro assembly process of the 50S ribosomal subunit. It is not involved in the protein synthesizing functions of that subunit. The sequence is that of Large ribosomal subunit protein bL20 from Acidovorax ebreus (strain TPSY) (Diaphorobacter sp. (strain TPSY)).